Reading from the N-terminus, the 440-residue chain is ATP-dependent protease ATPase subunit HslU (440 aa).

Residues V18, 60–65 (GVGKTE), D253, E318, and R390 contribute to the ATP site.

Belongs to the ClpX chaperone family. HslU subfamily. In terms of assembly, a double ring-shaped homohexamer of HslV is capped on each side by a ring-shaped HslU homohexamer. The assembly of the HslU/HslV complex is dependent on binding of ATP.

The protein localises to the cytoplasm. ATPase subunit of a proteasome-like degradation complex; this subunit has chaperone activity. The binding of ATP and its subsequent hydrolysis by HslU are essential for unfolding of protein substrates subsequently hydrolyzed by HslV. HslU recognizes the N-terminal part of its protein substrates and unfolds these before they are guided to HslV for hydrolysis. In Methylococcus capsulatus (strain ATCC 33009 / NCIMB 11132 / Bath), this protein is ATP-dependent protease ATPase subunit HslU.